A 794-amino-acid chain; its full sequence is Zinc finger Y-chromosomal protein 1 (794 aa).

The Nuclear localization signal motif lies at 380-389 (TKQKLKKKRR). C2H2-type zinc fingers lie at residues 411–433 (YPCM…MKNH), 442–464 (YRCT…LESH), 477–499 (LECE…KLTH), 508–531 (HICK…LAVH), 537–559 (HICV…MRTH), 565–588 (YLCQ…KTKH), 594–616 (FKCD…AILH), 622–645 (HQCL…ISVH), 651–673 (HKCE…EAAH), 679–702 (HQCR…LSVH), 708–730 (YRCK…MKTH), 736–759 (YQCE…ISIH), and 765–788 (HRCD…LKHH).

The protein belongs to the krueppel C2H2-type zinc-finger protein family. ZFX/ZFY subfamily.

It is found in the nucleus. Probable transcriptional activator. The protein is Zinc finger Y-chromosomal protein 1 (zfy1) of Xenopus laevis (African clawed frog).